The following is a 398-amino-acid chain: Secreted aspartic protease 2 (398 aa).

Residues 1–18 (MFLKNIFIALAIALLVDA) form the signal peptide. Residues 19–56 (TPTTTKRSAGFVALDFSVVKTPKAFPVTNGQEGKTSKR) constitute a propeptide, activation peptide. A Peptidase A1 domain is found at 70-384 (YAADITVGSN…DLDDNEISLA (315 aa)). Aspartate 88 is a catalytic residue. 88–90 (DTG) contributes to the pepstatin A binding site. Cysteine 103 and cysteine 115 are joined by a disulfide. 141 to 142 (GD) is a binding site for pepstatin A. Zn(2+)-binding residues include aspartate 247 and aspartate 270. The active site involves aspartate 274. 274–278 (DSGTT) is a binding site for pepstatin A. The cysteines at positions 312 and 350 are disulfide-linked. Asparagine 313 and asparagine 321 each carry an N-linked (GlcNAc...) asparagine glycan.

This sequence belongs to the peptidase A1 family. In terms of assembly, monomer.

It localises to the secreted. It carries out the reaction Preferential cleavage at the carboxyl of hydrophobic amino acids, but fails to cleave 15-Leu-|-Tyr-16, 16-Tyr-|-Leu-17 and 24-Phe-|-Phe-25 of insulin B chain. Activates trypsinogen, and degrades keratin.. Functionally, secreted aspartic peptidases (SAPs) are a group of ten acidic hydrolases considered as key virulence factors. These enzymes supply the fungus with nutrient amino acids as well as are able to degrade the selected host's proteins involved in the immune defense. Induces host inflammatory cytokine production in a proteolytic activity-independent way. Plays a role in tissue damage during superficial infection. Moreover, acts toward human hemoglobin though limited proteolysis to generate a variety of antimicrobial hemocidins, enabling to compete with the other microorganisms of the same physiological niche using the microbicidal peptides generated from the host protein. In terms of biological role, plays a key role in defense against host by cleaving histatin-5 (Hst 5), a peptide from human saliva that carries out fungicidal activity. The cleavage rate decreases in an order of SAP2 &gt; SAP9 &gt; SAP3 &gt; SAP7 &gt; SAP4 &gt; SAP1 &gt; SAP8. The first cleavage occurs between residues 'Lys-17' and 'His-18' of Hst 5, giving DSHAKRHHGYKRKFHEK and HHSHRGY peptides. Simultaneously, the DSHAKRHHGYKRK peptide is also formed. Further fragmentation by SAP2 results in FHEK and DSHAKRHHGY products. This chain is Secreted aspartic protease 2, found in Candida albicans (strain SC5314 / ATCC MYA-2876) (Yeast).